Reading from the N-terminus, the 317-residue chain is Protein-methionine-sulfoxide reductase catalytic subunit MsrP (317 aa).

The segment at residues 1 to 40 is a signal peptide (tat-type signal); that stretch reads MKKLTSNDVTPEEIFYQRRKIIKAFGLSAVATALPTFSFA. Mo-molybdopterin contacts are provided by residues Asn71, 74–75, Cys129, Thr164, Asn216, Arg221, and 232–234; these read YE and SIK.

It belongs to the MsrP family. In terms of assembly, heterodimer of a catalytic subunit (MsrP) and a heme-binding subunit (MsrQ). It depends on Mo-molybdopterin as a cofactor. Post-translationally, predicted to be exported by the Tat system. The position of the signal peptide cleavage has not been experimentally proven.

The protein localises to the periplasm. It carries out the reaction L-methionyl-[protein] + a quinone + H2O = L-methionyl-(S)-S-oxide-[protein] + a quinol. The catalysed reaction is L-methionyl-[protein] + a quinone + H2O = L-methionyl-(R)-S-oxide-[protein] + a quinol. Its function is as follows. Part of the MsrPQ system that repairs oxidized periplasmic proteins containing methionine sulfoxide residues (Met-O), using respiratory chain electrons. Thus protects these proteins from oxidative-stress damage caused by reactive species of oxygen and chlorine generated by the host defense mechanisms. MsrPQ is essential for the maintenance of envelope integrity under bleach stress, rescuing a wide series of structurally unrelated periplasmic proteins from methionine oxidation. The catalytic subunit MsrP is non-stereospecific, being able to reduce both (R-) and (S-) diastereoisomers of methionine sulfoxide. The chain is Protein-methionine-sulfoxide reductase catalytic subunit MsrP from Histophilus somni (strain 2336) (Haemophilus somnus).